Reading from the N-terminus, the 117-residue chain is Large ribosomal subunit protein uL18 (117 aa).

The protein belongs to the universal ribosomal protein uL18 family. In terms of assembly, part of the 50S ribosomal subunit; part of the 5S rRNA/L5/L18/L25 subcomplex. Contacts the 5S and 23S rRNAs.

Functionally, this is one of the proteins that bind and probably mediate the attachment of the 5S RNA into the large ribosomal subunit, where it forms part of the central protuberance. The polypeptide is Large ribosomal subunit protein uL18 (Haemophilus ducreyi (strain 35000HP / ATCC 700724)).